The primary structure comprises 990 residues: Storkhead-box protein 1 (990 aa).

A compositionally biased stretch (basic and acidic residues) spans 396-408; sequence TTRHKDSSKEVIG. Disordered stretches follow at residues 396–471, 562–586, 712–736, and 809–832; these read TTRH…VHHL, VAKA…PRRV, GLSD…DGGC, and LFSN…SRIP. Residues 416–431 show a composition bias toward basic residues; it reads KSRRRGSSHKGRHKAR. A compositionally biased stretch (polar residues) spans 809-830; it reads LFSNAGESPNPDLSDNPGQNSR.

As to expression, detected in sensory epithelial cells of the inner ear but not in adjacent surrounding tissue (at protein level).

It is found in the nucleus. The protein resides in the cytoplasm. It localises to the cytoskeleton. Its subcellular location is the microtubule organizing center. The protein localises to the centrosome. Its function is as follows. Involved in regulating the levels of reactive oxidative species and reactive nitrogen species and in mitochondrial homeostasis in the placenta. Required for regulation of inner ear epithelial cell proliferation via the AKT signaling pathway. Involved in cell cycle regulation by binding to the CCNB1 promoter, up-regulating its expression and promoting mitotic entry. Induces phosphorylation of MAPT/tau. This is Storkhead-box protein 1 from Mus musculus (Mouse).